We begin with the raw amino-acid sequence, 53 residues long: U1-poneritoxin-Dq5a (53 aa).

Residues 1–23 (MNIRLMFTLIALLVLTVSFSGAN) form the signal peptide. 3 disulfides stabilise this stretch: Cys25-Cys42, Cys32-Cys47, and Cys41-Cys52.

Expressed by the venom gland.

It localises to the secreted. Functionally, may have neurotoxic activity. In Dinoponera quadriceps (South American ant), this protein is U1-poneritoxin-Dq5a.